We begin with the raw amino-acid sequence, 355 residues long: Peptide chain release factor 1 (355 aa).

Glutamine 229 carries the post-translational modification N5-methylglutamine. A disordered region spans residues 280–299 (LDRERSAARKGQVGSGDRSE).

This sequence belongs to the prokaryotic/mitochondrial release factor family. Post-translationally, methylated by PrmC. Methylation increases the termination efficiency of RF1.

It localises to the cytoplasm. Functionally, peptide chain release factor 1 directs the termination of translation in response to the peptide chain termination codons UAG and UAA. In Parvibaculum lavamentivorans (strain DS-1 / DSM 13023 / NCIMB 13966), this protein is Peptide chain release factor 1.